The chain runs to 309 residues: uncharacterized protein (309 aa).

A run of 6 helical transmembrane segments spans residues 28–48 (IIAL…IMKP), 73–93 (MMLN…VIGW), 113–133 (LIVI…LLPI), 157–177 (ITAF…YFHS), 220–240 (FVVI…AALF), and 259–279 (IFAV…ILIL).

The protein resides in the cell membrane. This is an uncharacterized protein from Bacillus subtilis (strain 168).